The following is a 70-amino-acid chain: ATP synthase subunit c (70 aa).

Transmembrane regions (helical) follow at residues isoleucine 4 to isoleucine 24 and leucine 45 to phenylalanine 65.

This sequence belongs to the ATPase C chain family. F-type ATPases have 2 components, F(1) - the catalytic core - and F(0) - the membrane proton channel. F(1) has five subunits: alpha(3), beta(3), gamma(1), delta(1), epsilon(1). F(0) has three main subunits: a(1), b(2) and c(10-14). The alpha and beta chains form an alternating ring which encloses part of the gamma chain. F(1) is attached to F(0) by a central stalk formed by the gamma and epsilon chains, while a peripheral stalk is formed by the delta and b chains.

Its subcellular location is the cell membrane. In terms of biological role, f(1)F(0) ATP synthase produces ATP from ADP in the presence of a proton or sodium gradient. F-type ATPases consist of two structural domains, F(1) containing the extramembraneous catalytic core and F(0) containing the membrane proton channel, linked together by a central stalk and a peripheral stalk. During catalysis, ATP synthesis in the catalytic domain of F(1) is coupled via a rotary mechanism of the central stalk subunits to proton translocation. This chain is ATP synthase subunit c, found in Bacillus pumilus (strain SAFR-032).